The chain runs to 563 residues: MSDFVDRVTVHVKGGDGGNGSAGIRREKYKPLAGPNGGNGGDGGSVVFVADRNATSLLDYRFMPHRVAGSGTMGLGDNKDGSKGEDLILPVPCGTVVFEARGEQGKAKHPGAQLADLRHEGDRCVVAQGGAGGLGNIALANKTRRAPGFALLGELGEERDVILELKSIADVALVGFPSAGKSSLIAAMSSAKPKIADYPFTTLVPNLGVVIAGDSRYTIADVPGLIPGASEGKGLGLEFLRHIERTEIIAHVIDCATLEPDRDPMSDYHALENELALYADKLELPLGAIPIPERPRIVILNKIDVPEAKELAEFVRPEFERLGLKVFEISTASHEGLKELNFALSALVHEMREEVANREQAEEEARVVIKPLETKGRRPRRADEGGSALEFTVERRELGNGEVFFEVRGVKPERWVMQTNFDNDEAVGYLADRLAKLGVEDELRRKGAHPGDEVRIGRGARMVEFDWDPTISAGAEMLDGSNLGARGKDLRLEEQDPRTHRRSNAERRAQYHEMMDARAAVRDAMMAERKAGHWADPTVDDDRHDENSLFGHGESSEDGETEE.

One can recognise an Obg domain in the interval 2–168; it reads SDFVDRVTVH…RDVILELKSI (167 aa). Positions 169 to 349 constitute an OBG-type G domain; the sequence is ADVALVGFPS…LNFALSALVH (181 aa). GTP is bound by residues 175 to 182, 200 to 204, 221 to 224, 301 to 304, and 330 to 332; these read GFPSAGKS, FTTLV, DVPG, NKID, and STA. 2 residues coordinate Mg(2+): Ser182 and Thr202. Residues 383–469 form the OCT domain; that stretch reads DEGGSALEFT…ARMVEFDWDP (87 aa). 2 disordered regions span residues 478 to 509 and 528 to 563; these read LDGS…ERRA and ERKA…ETEE. Over residues 486 to 509 the composition is skewed to basic and acidic residues; sequence RGKDLRLEEQDPRTHRRSNAERRA.

It belongs to the TRAFAC class OBG-HflX-like GTPase superfamily. OBG GTPase family. In terms of assembly, monomer. Mg(2+) is required as a cofactor.

The protein localises to the cytoplasm. Its function is as follows. An essential GTPase which binds GTP, GDP and possibly (p)ppGpp with moderate affinity, with high nucleotide exchange rates and a fairly low GTP hydrolysis rate. Plays a role in control of the cell cycle, stress response, ribosome biogenesis and in those bacteria that undergo differentiation, in morphogenesis control. The chain is GTPase Obg from Bifidobacterium longum subsp. infantis (strain ATCC 15697 / DSM 20088 / JCM 1222 / NCTC 11817 / S12).